The sequence spans 202 residues: Recombination protein RecR (202 aa).

The C4-type zinc-finger motif lies at 57–72 (CGVCRTFTEQPCCDIC). The 96-residue stretch at 81 to 176 (GQICVVESPS…STTKIAHGVP (96 aa)) folds into the Toprim domain.

It belongs to the RecR family.

May play a role in DNA repair. It seems to be involved in an RecBC-independent recombinational process of DNA repair. It may act with RecF and RecO. This Hamiltonella defensa subsp. Acyrthosiphon pisum (strain 5AT) protein is Recombination protein RecR.